A 670-amino-acid chain; its full sequence is RxLR effector protein PSR2 (670 aa).

Residues 1-17 (MRLQCVVLFAALTLVAA) form the signal peptide. A RxLR-dEER motif is present at residues 39-54 (RLLRPGNPAGKEDEER). N-linked (GlcNAc...) asparagine glycosylation occurs at asparagine 57. A WY1 repeat occupies 79-126 (KLLKWADAKKPPETVFTRLRLDKTGTQLFDNTDFPVWAAYTRSVAQTD). Residues 79–670 (KLLKWADAKK…YSAKFKVRWG (592 aa)) form a 7 X 93 AA tandem repeats region. The LWY2 repeat unit spans residues 127–217 (SEASAVMLKT…NYMKLSNKEN (91 aa)). The stretch at 218–308 (PKAQTTLIAT…KYINYYNKEN (91 aa)) is one LWY3 repeat. An LWY4 repeat occupies 309-399 (PDEKTTVLAK…KYTENFNLNK (91 aa)). The LWY5 repeat unit spans residues 400–492 (EINEQVTAIQ…KFLEKYNTAN (93 aa)). The stretch at 493-583 (PGKEQTMISG…KYLNAFNDKA (91 aa)) is one LWY6 repeat. One copy of the LWY7 repeat lies at 584-670 (PVKKALMIDT…YSAKFKVRWG (87 aa)).

Belongs to the RxLR effector family. In terms of assembly, interacts with host dsRNA-binding protein DRB4.

The protein localises to the secreted. It localises to the host cell. Secreted effector that possesses RNA silencing suppression activity by inhibiting the biogenesis of small RNAs in the host plant to promote enhanced susceptibility of host to the pathogen during infection. Interferes with secondary siRNA production by associating with host dsRNA-binding protein DRB4. Inhibits the host salicylic acid pathway during infection. This is RxLR effector protein PSR2 from Phytophthora sojae (Soybean stem and root rot agent).